The chain runs to 115 residues: Pancreatic progenitor cell differentiation and proliferation factor B (115 aa).

The tract at residues 21–48 (IGSTSSSSSCGSSEYSGEVIPHHPGLPK) is disordered. Residues 22 to 37 (GSTSSSSSCGSSEYSG) are compositionally biased toward low complexity.

The protein belongs to the PPDPF family.

Probable regulator of exocrine pancreas development. The protein is Pancreatic progenitor cell differentiation and proliferation factor B (ppdpfb) of Danio rerio (Zebrafish).